Consider the following 435-residue polypeptide: Probable long-chain-alcohol O-fatty-acyltransferase 11 (435 aa).

11 consecutive transmembrane segments (helical) span residues 7–27, 36–56, 59–79, 120–140, 149–169, 200–220, 238–258, 263–283, 300–320, 363–383, and 406–426; these read NLIK…YVPT, FLSV…FASV, SGYT…LFSF, PIEV…SVVL, IYPI…LEIL, DFWG…DVYA, LGVF…FFYI, PTGE…AYDA, CLIL…WLFF, FFTG…IGFV, and FFIG…IGFV.

This sequence belongs to the wax synthase family.

It is found in the membrane. It catalyses the reaction a long chain fatty alcohol + a fatty acyl-CoA = a wax ester + CoA. In terms of biological role, catalyzes the final step in the synthesis of long-chain linear esters (waxes). The protein is Probable long-chain-alcohol O-fatty-acyltransferase 11 of Arabidopsis thaliana (Mouse-ear cress).